The following is a 420-amino-acid chain: Probable secreted beta-glucosidase SUN4 (420 aa).

Positions 1 to 24 (MKLSATTLTAASLIGYSTIVSALP) are cleaved as a signal peptide. Residues 89–145 (TKSSSKVASSSESTEQIATTSSSAQTTLTSSETSTSESSVPISTSGSASTSSAASSA) are disordered. Asparagine 395 carries N-linked (GlcNAc...) asparagine glycosylation.

It belongs to the SUN family. Glycosylated.

The protein localises to the secreted. It is found in the cell wall. In terms of biological role, involved in the remodeling of the cell wall during the various phases of yeast culture development and under various environmental conditions and plays a role in septation. This is Probable secreted beta-glucosidase SUN4 (SUN4) from Saccharomyces cerevisiae (strain ATCC 204508 / S288c) (Baker's yeast).